We begin with the raw amino-acid sequence, 486 residues long: Glutamyl-tRNA(Gln) amidotransferase subunit A (486 aa).

Catalysis depends on charge relay system residues Lys-75 and Ser-150. The active-site Acyl-ester intermediate is Ser-174.

This sequence belongs to the amidase family. GatA subfamily. Heterotrimer of A, B and C subunits.

The catalysed reaction is L-glutamyl-tRNA(Gln) + L-glutamine + ATP + H2O = L-glutaminyl-tRNA(Gln) + L-glutamate + ADP + phosphate + H(+). Functionally, allows the formation of correctly charged Gln-tRNA(Gln) through the transamidation of misacylated Glu-tRNA(Gln) in organisms which lack glutaminyl-tRNA synthetase. The reaction takes place in the presence of glutamine and ATP through an activated gamma-phospho-Glu-tRNA(Gln). In Nostoc sp. (strain PCC 7120 / SAG 25.82 / UTEX 2576), this protein is Glutamyl-tRNA(Gln) amidotransferase subunit A.